Reading from the N-terminus, the 129-residue chain is Aspartate 1-decarboxylase (129 aa).

Ser25 serves as the catalytic Schiff-base intermediate with substrate; via pyruvic acid. Ser25 carries the pyruvic acid (Ser) modification. Thr57 is a substrate binding site. Tyr58 serves as the catalytic Proton donor. 73–75 (GAA) is a binding site for substrate.

Belongs to the PanD family. In terms of assembly, heterooctamer of four alpha and four beta subunits. It depends on pyruvate as a cofactor. Is synthesized initially as an inactive proenzyme, which is activated by self-cleavage at a specific serine bond to produce a beta-subunit with a hydroxyl group at its C-terminus and an alpha-subunit with a pyruvoyl group at its N-terminus.

It is found in the cytoplasm. It carries out the reaction L-aspartate + H(+) = beta-alanine + CO2. It participates in cofactor biosynthesis; (R)-pantothenate biosynthesis; beta-alanine from L-aspartate: step 1/1. Functionally, catalyzes the pyruvoyl-dependent decarboxylation of aspartate to produce beta-alanine. This chain is Aspartate 1-decarboxylase, found in Chlorobium chlorochromatii (strain CaD3).